The chain runs to 204 residues: Lipoprotein signal peptidase (204 aa).

The interval 1–42 (MAEAERIIGTPDIPDAAGEGQERPDADPEREQQEQEQAPERT) is disordered. The segment covering 20 to 42 (GQERPDADPEREQQEQEQAPERT) has biased composition (basic and acidic residues). A run of 3 helical transmembrane segments spans residues 50-70 (VLFA…MLVV), 100-120 (FGEA…VVIA), and 126-146 (LHSL…LGNL). Catalysis depends on residues aspartate 163 and aspartate 177. Residues 170 to 190 (FAVFNLADSAIVCGGILIVIL) form a helical membrane-spanning segment.

It belongs to the peptidase A8 family.

The protein localises to the cell membrane. The catalysed reaction is Release of signal peptides from bacterial membrane prolipoproteins. Hydrolyzes -Xaa-Yaa-Zaa-|-(S,diacylglyceryl)Cys-, in which Xaa is hydrophobic (preferably Leu), and Yaa (Ala or Ser) and Zaa (Gly or Ala) have small, neutral side chains.. The protein operates within protein modification; lipoprotein biosynthesis (signal peptide cleavage). This protein specifically catalyzes the removal of signal peptides from prolipoproteins. In Streptomyces coelicolor (strain ATCC BAA-471 / A3(2) / M145), this protein is Lipoprotein signal peptidase.